The primary structure comprises 389 residues: Chalcone synthase 4-2 (389 aa).

Cys-164 is a catalytic residue.

This sequence belongs to the thiolase-like superfamily. Chalcone/stilbene synthases family.

The enzyme catalyses (E)-4-coumaroyl-CoA + 3 malonyl-CoA + 3 H(+) = 2',4,4',6'-tetrahydroxychalcone + 3 CO2 + 4 CoA. It functions in the pathway secondary metabolite biosynthesis; flavonoid biosynthesis. Its function is as follows. The primary product of this enzyme is 4,2',4',6'-tetrahydroxychalcone (also termed naringenin-chalcone or chalcone) which can under specific conditions spontaneously isomerize into naringenin. This Medicago sativa (Alfalfa) protein is Chalcone synthase 4-2 (CHS4-2).